We begin with the raw amino-acid sequence, 956 residues long: Calsyntenin-3 (956 aa).

A signal peptide spans 1–19; the sequence is MTLLLLPLLLASLLASCSC. At 20–847 the chain is on the extracellular side; it reads NKANKHKPWI…SHRNSMIPSA (828 aa). Cadherin domains lie at 29-145 and 146-246; these read IEAE…APVF and VERL…KPSW. 5 N-linked (GlcNAc...) asparagine glycosylation sites follow: Asn-299, Asn-327, Asn-347, Asn-507, and Asn-740. Residues 848-868 traverse the membrane as a helical segment; the sequence is ATLIIVVCVGFLVLMVVLGLV. At 869–956 the chain is on the cytoplasmic side; the sequence is RIHSLHRRVS…RIIETPPHRY (88 aa). The interval 917–956 is disordered; the sequence is ACVTGAVGGQQEDEDSSDSEVADSPSSDERRIIETPPHRY. A compositionally biased stretch (acidic residues) spans 927–937; the sequence is QEDEDSSDSEV. Basic and acidic residues predominate over residues 943–956; that stretch reads SDERRIIETPPHRY.

Belongs to the calsyntenin family. Interacts (via cadherin domains) with both alpha and beta isoforms of neurexins (NRXN1, NRXN2 and NRXN3). Directly interacts with APBA2. Forms a tripartite complex with APBA2 and APP. Interacts with low affinity with KLC1. Interacts with SLC23A2/SVCT2. In terms of processing, proteolytically processed under normal cellular conditions. A primary zeta-cleavage generates a large extracellular (soluble) N-terminal domain (sAlc) and a short C-terminal transmembrane fragment (CTF1). A secondary cleavage catalyzed by gamma-secretase within the transmembrane domain releases the beta-Alc-beta chain in the extracellular milieu and produces an intracellular fragment (AlcICD). This processing is strongly suppressed in the tripartite complex formed with APBA2 and APP, which seems to prevent the association with gamma-secretase.

The protein resides in the postsynaptic cell membrane. The protein localises to the endoplasmic reticulum membrane. It localises to the golgi apparatus membrane. It is found in the cell projection. Its subcellular location is the dendrite. Functionally, postsynaptic adhesion molecule that binds to presynaptic neurexins to mediate both excitatory and inhibitory synapse formation. Promotes synapse development by acting as a cell adhesion molecule at the postsynaptic membrane, which associates with both neurexin-alpha and neurexin-beta proteins at the presynaptic membrane. Regulates the balance between excitatory and inhibitory synapses by inhibiting formation of excitatory parallel-fiber synapses and promoting formation of inhibitory synapses in the same neuron. May also be involved in ascorbate (vitamin C) uptake via its interaction with SLC23A2/SVCT2. Complex formation with APBA2 and APP, stabilizes APP metabolism and enhances APBA2-mediated suppression of beta-APP40 secretion, due to the retardation of intracellular APP maturation. In Pongo abelii (Sumatran orangutan), this protein is Calsyntenin-3 (CLSTN3).